The primary structure comprises 425 residues: Palmitoyltransferase ZDHHC23 (425 aa).

Topologically, residues 1 to 81 are cytoplasmic; the sequence is MKPVKKKKTE…RIPWLRGAKK (81 aa). The chain crosses the membrane as a helical span at residues 82–99; the sequence is VNISIVPPLVLLPVFLHV. Residues 100–102 are Lumenal-facing; sequence ASW. A helical membrane pass occupies residues 103–125; that stretch reads HFLLGVVVLTSLPMLALWYYYLT. The Cytoplasmic segment spans residues 126 to 130; the sequence is HRRKE. The chain crosses the membrane as a helical span at residues 131 to 151; it reads QTLFFLSLGLFSLGYMYYVFL. At 152-159 the chain is on the lumenal side; sequence REVVPQGR. Residues 160 to 180 traverse the membrane as a helical segment; the sequence is VGPTQLALLTCGLLLILLALY. Residues 181 to 292 lie on the Cytoplasmic side of the membrane; the sequence is RAKKNPGYLS…NSCVGESNHQ (112 aa). The DHHC domain occupies 249–299; that stretch reads DWCAKCQLVRPARAWHCRICGICVRRMDHHCVWINSCVGESNHQAFILALS. Catalysis depends on Cys-279, which acts as the S-palmitoyl cysteine intermediate. The helical transmembrane segment at 293–313 threads the bilayer; the sequence is AFILALSIFLLTSVYGISLTL. Topologically, residues 314-343 are lumenal; the sequence is NTICRDRSLFTALFYCPGVYANYSSALSFT. The helical transmembrane segment at 344-364 threads the bilayer; that stretch reads CVWYSVIITAGMAYIFLIQLI. Topologically, residues 365-425 are cytoplasmic; that stretch reads NISYNVTERE…TVHTPAEDIV (61 aa). The segment at 422-425 is interaction with NOS1; sequence EDIV.

It belongs to the DHHC palmitoyltransferase family. Interacts with NOS1. As to expression, expressed in the brain.

The protein resides in the golgi apparatus membrane. It is found in the golgi apparatus. It localises to the trans-Golgi network membrane. The catalysed reaction is L-cysteinyl-[protein] + hexadecanoyl-CoA = S-hexadecanoyl-L-cysteinyl-[protein] + CoA. Functionally, palmitoyltransferase that could catalyze the addition of palmitate onto various protein substrates and be involved in a variety of cellular processes. Palmitoyltransferase that mediates palmitoylation of KCNMA1, regulating localization of KCNMA1 to the plasma membrane. May be involved in NOS1 regulation and targeting to the synaptic membrane. The protein is Palmitoyltransferase ZDHHC23 of Mus musculus (Mouse).